Here is a 360-residue protein sequence, read N- to C-terminus: GTPase Obg (360 aa).

The Obg domain occupies 1 to 156 (MFVDSVEIII…KCVRLELKLI (156 aa)). Residues 157–360 (ADIGLVGFPN…LKFVLLKALQ (204 aa)) form the OBG-type G domain. GTP is bound by residues 163–170 (GFPNAGKS), 188–192 (FTTLV), 210–213 (DIPG), 279–282 (NKCD), and 341–343 (SAV). Mg(2+)-binding residues include S170 and T190.

The protein belongs to the TRAFAC class OBG-HflX-like GTPase superfamily. OBG GTPase family. In terms of assembly, monomer. Mg(2+) serves as cofactor.

The protein localises to the cytoplasm. Functionally, an essential GTPase which binds GTP, GDP and possibly (p)ppGpp with moderate affinity, with high nucleotide exchange rates and a fairly low GTP hydrolysis rate. Plays a role in control of the cell cycle, stress response, ribosome biogenesis and in those bacteria that undergo differentiation, in morphogenesis control. The protein is GTPase Obg of Helicobacter pylori (strain J99 / ATCC 700824) (Campylobacter pylori J99).